The sequence spans 178 residues: Endoribonuclease YbeY (178 aa).

3 residues coordinate Zn(2+): H118, H122, and H128.

Belongs to the endoribonuclease YbeY family. It depends on Zn(2+) as a cofactor.

The protein resides in the cytoplasm. In terms of biological role, single strand-specific metallo-endoribonuclease involved in late-stage 70S ribosome quality control and in maturation of the 3' terminus of the 16S rRNA. This is Endoribonuclease YbeY from Mycolicibacterium gilvum (strain PYR-GCK) (Mycobacterium gilvum (strain PYR-GCK)).